The primary structure comprises 315 residues: Ribosomal RNA small subunit methyltransferase H (315 aa).

S-adenosyl-L-methionine-binding positions include 61–63, Asp-80, Phe-108, Asp-124, and Gln-131; that span reads GGH. The interval 291-315 is disordered; sequence PQPEEEEKNPRSRSAKLRFAQRKPL. Positions 301–315 are enriched in basic residues; that stretch reads RSRSAKLRFAQRKPL.

This sequence belongs to the methyltransferase superfamily. RsmH family.

It is found in the cytoplasm. The enzyme catalyses cytidine(1402) in 16S rRNA + S-adenosyl-L-methionine = N(4)-methylcytidine(1402) in 16S rRNA + S-adenosyl-L-homocysteine + H(+). Functionally, specifically methylates the N4 position of cytidine in position 1402 (C1402) of 16S rRNA. The sequence is that of Ribosomal RNA small subunit methyltransferase H from Crocosphaera subtropica (strain ATCC 51142 / BH68) (Cyanothece sp. (strain ATCC 51142)).